The primary structure comprises 292 residues: Small ribosomal subunit protein uS5 (292 aa).

The disordered stretch occupies residues 1-56; sequence MADDAGAAGGPGGPGGPGMGGRGGFRGGFGSGIRGRGRGRGRGRGRGRGARGGKAE. At A2 the chain carries N-acetylalanine. Positions 7-34 are enriched in gly residues; sequence AAGGPGGPGGPGMGGRGGFRGGFGSGIR. Positions 35–51 are enriched in basic residues; the sequence is GRGRGRGRGRGRGRGAR. Glycyl lysine isopeptide (Lys-Gly) (interchain with G-Cter in ubiquitin) cross-links involve residues K54 and K58. Residues 102 to 165 form the S5 DRBM domain; it reads LKDEVLKIMP…ILAKLSIVPV (64 aa). A Phosphothreonine modification is found at T251. K262 is modified (N6-acetyllysine). At S263 the chain carries Phosphoserine. The residue at position 269 (T269) is a Phosphothreonine. K274 carries the N6-acetyllysine; alternate modification. K274 is covalently cross-linked (Glycyl lysine isopeptide (Lys-Gly) (interchain with G-Cter in SUMO1); alternate). K274 participates in a covalent cross-link: Glycyl lysine isopeptide (Lys-Gly) (interchain with G-Cter in SUMO2); alternate. K274 participates in a covalent cross-link: Glycyl lysine isopeptide (Lys-Gly) (interchain with G-Cter in ubiquitin); alternate. Phosphoserine is present on S280.

This sequence belongs to the universal ribosomal protein uS5 family. In terms of assembly, component of the small ribosomal subunit. Interacts with zinc finger protein ZNF277 (via zinc-finger domains); the interaction is direct; the interaction is extra-ribosomal. Interaction with ZNF277 competes with the binding of RPS2 to protein arginine methyltransferase PRMT3. In terms of processing, citrullinated by PADI4 in the Arg/Gly-rich region. Post-translationally, asymmetric arginine dimethylation by PRMT3 occurs at multiple sites in the Arg/Gly-rich region. Monoubiquitinated at Lys-54 and Lys-58 by RNF10 when a ribosome has stalled during translation, leading to its degradation by the proteasome. Deubiquitinated at Lys-54 and Lys-58 by USP10, preventing degradation by the proteasome and promoting 40S ribosome subunit recycling following ribosome dissociation.

It is found in the cytoplasm. Its subcellular location is the nucleus. It localises to the nucleolus. Functionally, component of the ribosome, a large ribonucleoprotein complex responsible for the synthesis of proteins in the cell. The small ribosomal subunit (SSU) binds messenger RNAs (mRNAs) and translates the encoded message by selecting cognate aminoacyl-transfer RNA (tRNA) molecules. The large subunit (LSU) contains the ribosomal catalytic site termed the peptidyl transferase center (PTC), which catalyzes the formation of peptide bonds, thereby polymerizing the amino acids delivered by tRNAs into a polypeptide chain. The nascent polypeptides leave the ribosome through a tunnel in the LSU and interact with protein factors that function in enzymatic processing, targeting, and the membrane insertion of nascent chains at the exit of the ribosomal tunnel. Plays a role in the assembly and function of the 40S ribosomal subunit. The polypeptide is Small ribosomal subunit protein uS5 (RPS2) (Oryctolagus cuniculus (Rabbit)).